Here is a 141-residue protein sequence, read N- to C-terminus: Calcium-binding protein SPEC 2D (141 aa).

EF-hand domains follow at residues 10 to 42, 43 to 72, 73 to 107, and 108 to 141; these read DQIK…MKSV, GHVL…AMIL, DKKC…FDRQ, and ITED…MNFC. Ca(2+) contacts are provided by Asp-23, Asn-25, Asp-27, and Asn-29. Asp-84, Asp-86, Lys-90, Asp-95, Asp-121, Asp-125, Lys-127, and Glu-132 together coordinate Ca(2+).

Found in cell lineages giving rise to the aboral ectoderm, a squamous epithelium covering the surface of the late stage embryo and larva.

Calcium-binding protein involved in larval development and metamorphosis. Likely to function as calcium buffers mediating the transport of calcium from the sea water to the blastocoel where calcium is required for skeleton formation. The chain is Calcium-binding protein SPEC 2D (SPEC2D) from Strongylocentrotus purpuratus (Purple sea urchin).